The primary structure comprises 109 residues: Flagellar hook-basal body complex protein FliE 2 (109 aa).

Belongs to the FliE family.

The protein resides in the bacterial flagellum basal body. The chain is Flagellar hook-basal body complex protein FliE 2 (fliE2) from Bradyrhizobium diazoefficiens (strain JCM 10833 / BCRC 13528 / IAM 13628 / NBRC 14792 / USDA 110).